A 447-amino-acid polypeptide reads, in one-letter code: Trigger factor (447 aa).

The 86-residue stretch at 159–244 (GDMLLMQVES…VREIKEEKLP (86 aa)) folds into the PPIase FKBP-type domain.

This sequence belongs to the FKBP-type PPIase family. Tig subfamily.

It is found in the cytoplasm. It catalyses the reaction [protein]-peptidylproline (omega=180) = [protein]-peptidylproline (omega=0). Involved in protein export. Acts as a chaperone by maintaining the newly synthesized protein in an open conformation. Functions as a peptidyl-prolyl cis-trans isomerase. The polypeptide is Trigger factor (Dehalococcoides mccartyi (strain CBDB1)).